The sequence spans 229 residues: MSSLRNAIQRRAHKERAQPESRKKFGLLEKHKDYIVRAKAFHQKEETIRKLKEKASFRNPDEFYFKMINSKTVDGIHRPKPEANKYTEDELMLLKTKDMGYILQGIQSEKKKIEKLSSMLHELDNKRPNKHVYFAEDREEVKEIQSRIEQKSSSLGLDNIPSRIKRKTASSYRELEERKQRVQKLEKLYADMALQKELKKPGRKRKLREDEIENQTSRPVYKWRAQRKR.

Disordered regions lie at residues 1–23 and 199–229; these read MSSLRNAIQRRAHKERAQPESRK and KKPGRKRKLREDEIENQTSRPVYKWRAQRKR.

Belongs to the UTP11 family. In terms of assembly, component of the ribosomal small subunit (SSU) processome.

Its subcellular location is the nucleus. It localises to the nucleolus. Functionally, involved in nucleolar processing of pre-18S ribosomal RNA. This is Probable U3 small nucleolar RNA-associated protein 11 from Oryza sativa subsp. japonica (Rice).